Reading from the N-terminus, the 190-residue chain is Elongation factor P-like protein (190 aa).

It belongs to the elongation factor P family.

The protein is Elongation factor P-like protein of Klebsiella pneumoniae (strain 342).